The sequence spans 58 residues: U8-ctenitoxin-Pr1a (58 aa).

5 cysteine pairs are disulfide-bonded: Cys-2/Cys-16, Cys-9/Cys-22, Cys-15/Cys-40, Cys-24/Cys-38, and Cys-48/Cys-55.

As to expression, expressed by the venom gland.

It is found in the secreted. Functionally, no toxic effects on mice at dose levels of 5 ug per mouse. May be toxic to insects. The chain is U8-ctenitoxin-Pr1a from Phoneutria reidyi (Brazilian Amazonian armed spider).